An 87-amino-acid chain; its full sequence is Small ribosomal subunit protein bS20 (87 aa).

Positions 1–22 (MANIKSQIKRIGTNKKAQERNK) are disordered.

This sequence belongs to the bacterial ribosomal protein bS20 family.

In terms of biological role, binds directly to 16S ribosomal RNA. The sequence is that of Small ribosomal subunit protein bS20 from Clavibacter michiganensis subsp. michiganensis (strain NCPPB 382).